We begin with the raw amino-acid sequence, 536 residues long: MELQRNFFIFAFLFVSFLLWQAWQSQSLKKNKKNEETNSFFHLNHKKEDKNQIIIKNDVLRLVINMYGGDIEEASLLDYKTQLNSPENLKLLETKSDFVYQAQSGLIGKDGLDNSINKIRPLYSAKKNFFELGHNEKELRVPITFIAKNGITYIKNFILKPGKYNVEVEYDINNLSNKKLELNIFGQLKQTVKLPKNRDIYSGNFALQTFRGAAYSSSDAKYEKYKFDNIANHEHLHIITHHGWIAMLQQYFVVAWVPDTNISSSNIIYTSYLDNDGIAIIGYKSSLINIPSNSRYIIKSKLWIGPEKQQEMALVAPNLDLTVDYGFLWFLSQPLFKLLSTIHNFIGNWGFSIILITFMMKAITYPLTKAQYTSMSKMRELQPKINELKKNFGHDKQRMSKEIMALYKKEKINPLGGCLPVFIQMPIFLSLYYMLIGSVELRHAPFLFWIKDLSDQDPYYVLPIFMGLTMFFIQRTSSNNISDPFQQKIMHFMPFIFTVFFLWFPSGLVLYYIVSNLVTIIQQKYILSNFKKNQKR.

The next 5 membrane-spanning stretches (helical) occupy residues 7–27 (FFIFAFLFVSFLLWQAWQSQS), 338–358 (LLSTIHNFIGNWGFSIILITF), 419–439 (LPVFIQMPIFLSLYYMLIGSV), 453–473 (LSDQDPYYVLPIFMGLTMFFI), and 494–514 (PFIFTVFFLWFPSGLVLYYIV).

It belongs to the OXA1/ALB3/YidC family. Type 1 subfamily. As to quaternary structure, interacts with the Sec translocase complex via SecD. Specifically interacts with transmembrane segments of nascent integral membrane proteins during membrane integration.

It localises to the cell membrane. Functionally, required for the insertion and/or proper folding and/or complex formation of integral membrane proteins into the membrane. Involved in integration of membrane proteins that insert both dependently and independently of the Sec translocase complex, as well as at least some lipoproteins. Aids folding of multispanning membrane proteins. The polypeptide is Membrane protein insertase YidC (Buchnera aphidicola subsp. Schizaphis graminum (strain Sg)).